Consider the following 267-residue polypeptide: MNALLSNPFKERLRKGEVQIGLWLSSTTAYMAEIAATSGYDWLLIDGEHAPNTIQDLYHQLQAVAPYASQPVIRPVEGSKPLIKQVLDIGAQTLLIPMVDTAEQARQVVSATRYPPYGERGVGASVARAARWGRIENYMAQVNDSLCLLVQVESKTALDNLDEILDVEGIDGVFIGPADLSASLGYPDNAGHPEVQRIIETSIRRIRAAGKAAGFLAVAPDMAQQCLAWGANFVAVGVDTMLYSDALDQRLAMFKSGKNGPRIKGSY.

Catalysis depends on histidine 49, which acts as the Proton acceptor. Glutamine 151 contributes to the substrate binding site. Glutamate 153 contacts Mg(2+). The substrate site is built by alanine 178 and aspartate 179. Aspartate 179 contacts Mg(2+).

It belongs to the HpcH/HpaI aldolase family. KDR aldolase subfamily. In terms of assembly, homohexamer. Requires Mg(2+) as cofactor. Ni(2+) serves as cofactor.

The enzyme catalyses 2-dehydro-3-deoxy-L-rhamnonate = (S)-lactaldehyde + pyruvate. The catalysed reaction is D-glyceraldehyde + 3-hydroxypyruvate = (3R,4S,5R)-3,4,5,6-tetrahydroxy-2-oxohexanoate. It catalyses the reaction D-glyceraldehyde + 3-hydroxypyruvate = 2-dehydro-D-gluconate. It carries out the reaction D-glyceraldehyde + 3-hydroxypyruvate = 2-dehydro-D-galactonate. The enzyme catalyses D-glyceraldehyde + pyruvate = 2-dehydro-3-deoxy-L-galactonate. The catalysed reaction is 2-dehydro-3-deoxy-D-gluconate = D-glyceraldehyde + pyruvate. Catalyzes the reversible retro-aldol cleavage of 2-keto-3-deoxy-L-rhamnonate (KDR) to pyruvate and lactaldehyde. 2-keto-3-deoxy-L-mannonate, 2-keto-3-deoxy-L-lyxonate and 4-hydroxy-2-ketoheptane-1,7-dioate (HKHD) are also reasonably good substrates, although 2-keto-3-deoxy-L-rhamnonate is likely to be the physiological substrate. In vitro, can catalyze the aldolisation reaction between hydroxypyruvate (HPA) or pyruvate (PA) and D-glyceraldehyde (D-GA). The condensation of hydroxypyruvate and D-glyceraldehyde produces (3R,4S,5R)-3,4,5,6-tetrahydroxy-2-oxohexanoate as the major product, 2-dehydro-D-gluconate and 2-dehydro-D-galactonate. The condensation of pyruvate and D-glyceraldehyde produces 2-dehydro-3-deoxy-L-galactonate as the major product and 2-dehydro-3-deoxy-D-gluconate. The chain is 2-keto-3-deoxy-L-rhamnonate aldolase (rhmA) from Escherichia coli (strain K12).